Reading from the N-terminus, the 266-residue chain is Small ribosomal subunit protein uS3 (266 aa).

The region spanning Val39–Arg107 is the KH type-2 domain. The tract at residues Glu218 to Glu266 is disordered. 2 stretches are compositionally biased toward basic and acidic residues: residues Arg230–Glu241 and Gly257–Glu266.

It belongs to the universal ribosomal protein uS3 family. As to quaternary structure, part of the 30S ribosomal subunit. Forms a tight complex with proteins S10 and S14.

Its function is as follows. Binds the lower part of the 30S subunit head. Binds mRNA in the 70S ribosome, positioning it for translation. In Burkholderia ambifaria (strain MC40-6), this protein is Small ribosomal subunit protein uS3.